A 128-amino-acid polypeptide reads, in one-letter code: Prefoldin subunit 1 (128 aa).

2 coiled-coil regions span residues 17–37 (MIEL…KEGD) and 81–115 (LKDS…LLQQ).

This sequence belongs to the prefoldin subunit beta family. As to quaternary structure, heterohexamer of two PFD-alpha type and four PFD-beta type subunits forming prefoldin co-chaperone complex. Interacts with LSM8, a specific subunit of the LSM2-8 complex, which is a core component of the spliceosome.

It is found in the cytoplasm. Its subcellular location is the nucleus. Binds specifically to cytosolic chaperonin (c-CPN) and transfers target proteins to it. Binds to nascent polypeptide chain and promotes folding in an environment in which there are many competing pathways for nonnative proteins. Together with other chaperonins, contribute to the regulation of gene expression by modulating the spliceosome function on pre-mRNA splicing post-transcriptionally by acting as a co-chaperone of Hsp90 to control levels of LSM8. Required for microtubules (MTs) organization and dynamicity. Involved in the process leading to microtubules dissociation in response to gibberellic acid (GA) probably due to the DELLA proteins-mediated translocation of the prefoldin co-chaperone complex from the cytoplasm to the nucleus. This is Prefoldin subunit 1 from Arabidopsis thaliana (Mouse-ear cress).